We begin with the raw amino-acid sequence, 261 residues long: Monensin polyketide synthase putative ketoacyl reductase (261 aa).

An NAD(+)-binding site is contributed by 10-34; sequence LVTGATSGIGLATARLLAAQGHLVF. Ser-144 lines the substrate pocket. Catalysis depends on Tyr-157, which acts as the Proton acceptor.

It belongs to the short-chain dehydrogenases/reductases (SDR) family.

It participates in antifungal biosynthesis; monensin biosynthesis. This is Monensin polyketide synthase putative ketoacyl reductase from Streptomyces virginiae (Streptomyces cinnamonensis).